The following is a 585-amino-acid chain: Organic cation transporter 1 (585 aa).

The Cytoplasmic segment spans residues Met-1 to Gln-40. A helical transmembrane segment spans residues Ile-41–Asn-61. Residues Ile-62–Glu-155 are Extracellular-facing. N-linked (GlcNAc...) asparagine glycans are attached at residues Asn-87, Asn-98, and Asn-133. The chain crosses the membrane as a helical span at residues Ile-156–Ala-176. Over Asp-177 to Ser-184 the chain is Cytoplasmic. A helical membrane pass occupies residues Phe-185–Ile-205. Over Glu-206–Arg-212 the chain is Extracellular. The chain crosses the membrane as a helical span at residues Phe-213 to Phe-233. At Met-234–Gly-243 the chain is on the cytoplasmic side. A helical transmembrane segment spans residues Leu-244–Ile-264. Residues Arg-265–Gln-269 are Extracellular-facing. The chain crosses the membrane as a helical span at residues Leu-270 to Glu-290. At Ser-291–Thr-360 the chain is on the cytoplasmic side. The chain crosses the membrane as a helical span at residues Leu-361–Val-381. Residues Ser-382–Tyr-389 are Extracellular-facing. The chain crosses the membrane as a helical span at residues Trp-390–Leu-410. The Cytoplasmic segment spans residues Gln-411 to Arg-416. A helical membrane pass occupies residues Trp-417–Pro-437. Topologically, residues Asp-438 to Ser-446 are extracellular. Residues Ala-447–Gly-467 form a helical membrane-spanning segment. At Glu-468–Ala-476 the chain is on the cytoplasmic side. Residues Ile-477 to Val-497 form a helical membrane-spanning segment. The Extracellular portion of the chain corresponds to Asn-498–Lys-504. Residues Ile-505–Leu-525 form a helical membrane-spanning segment. Over Pro-526 to Ile-585 the chain is Cytoplasmic. Residues Gly-544–Ile-585 are disordered. The segment covering Arg-575–Ile-585 has biased composition (basic residues).

Belongs to the major facilitator (TC 2.A.1) superfamily. Organic cation transporter (TC 2.A.1.19) family.

The protein resides in the membrane. In terms of biological role, transports organic cations such as tetraethylammonium (TEA). Displays a broad substrate specificity. This is Organic cation transporter 1 (oct-1) from Caenorhabditis elegans.